Consider the following 240-residue polypeptide: Izumo sperm-egg fusion protein 3 (240 aa).

The signal sequence occupies residues Met1–Gly22. At Cys23–Glu176 the chain is on the extracellular side. A helical membrane pass occupies residues Ile177–Phe197. Residues His198–Glu240 are Cytoplasmic-facing.

Belongs to the Izumo family. As to quaternary structure, monomer and homodimer.

It localises to the cell membrane. This Bos taurus (Bovine) protein is Izumo sperm-egg fusion protein 3 (IZUMO3).